The primary structure comprises 562 residues: Scaffold protein FimL (562 aa).

Interacts with PilG and FimV.

The protein localises to the cytoplasm. Functionally, regulates multiple virulence functions including type IV pilus (T4P)-mediated assembly and twitching motility as well as cAMP-dependent virulence gene expression. Regulates intracellular cyclic AMP (cAMP) levels through the activation of adenylate cyclase CyaB. Also functions as a scaffold linking FimV and PilG at the pole, where type IV pilus (T4P), the Chp chemosensory system and the CyaB adenylate cyclase interact. This chain is Scaffold protein FimL (fimL), found in Pseudomonas aeruginosa (strain ATCC 15692 / DSM 22644 / CIP 104116 / JCM 14847 / LMG 12228 / 1C / PRS 101 / PAO1).